The sequence spans 118 residues: Large ribosomal subunit protein bL19 (118 aa).

Belongs to the bacterial ribosomal protein bL19 family.

Functionally, this protein is located at the 30S-50S ribosomal subunit interface and may play a role in the structure and function of the aminoacyl-tRNA binding site. This chain is Large ribosomal subunit protein bL19, found in Herpetosiphon aurantiacus (strain ATCC 23779 / DSM 785 / 114-95).